The chain runs to 98 residues: DNA-binding protein HU (98 aa).

Belongs to the bacterial histone-like protein family. As to quaternary structure, homodimer.

Functionally, histone-like DNA-binding protein which is capable of wrapping DNA to stabilize it, and thus to prevent its denaturation under extreme environmental conditions. This Campylobacter jejuni subsp. jejuni serotype O:2 (strain ATCC 700819 / NCTC 11168) protein is DNA-binding protein HU (hup).